The chain runs to 256 residues: Small ribosomal subunit protein uS2 (256 aa).

The stretch at 104–149 (NFKTISQRVHRLEELEALFASPEIEERPKKEQVRLKHELERLQKYL) forms a coiled coil.

Belongs to the universal ribosomal protein uS2 family. Part of the 30S ribosomal subunit. Contacts protein S8.

Functionally, spans the head-body hinge region of the 30S subunit. Is loosely associated with the 30S subunit. This is Small ribosomal subunit protein uS2 (rpsB) from Thermus thermophilus (strain ATCC BAA-163 / DSM 7039 / HB27).